The primary structure comprises 392 residues: Cobalt-precorrin-5B C(1)-methyltransferase (392 aa).

Belongs to the CbiD family.

It carries out the reaction Co-precorrin-5B + S-adenosyl-L-methionine = Co-precorrin-6A + S-adenosyl-L-homocysteine. It participates in cofactor biosynthesis; adenosylcobalamin biosynthesis; cob(II)yrinate a,c-diamide from sirohydrochlorin (anaerobic route): step 6/10. Catalyzes the methylation of C-1 in cobalt-precorrin-5B to form cobalt-precorrin-6A. In Pelobacter propionicus (strain DSM 2379 / NBRC 103807 / OttBd1), this protein is Cobalt-precorrin-5B C(1)-methyltransferase.